The primary structure comprises 590 residues: Aspartate--tRNA(Asp/Asn) ligase (590 aa).

Residue Glu-175 coordinates L-aspartate. Residues 199 to 202 (QQYK) are aspartate. The L-aspartate site is built by Arg-221 and His-450. Position 221-223 (221-223 (RDE)) interacts with ATP. Glu-484 contributes to the ATP binding site. Arg-491 contributes to the L-aspartate binding site. Residue 536–539 (GVDR) participates in ATP binding.

The protein belongs to the class-II aminoacyl-tRNA synthetase family. Type 1 subfamily. In terms of assembly, homodimer.

It is found in the cytoplasm. The enzyme catalyses tRNA(Asx) + L-aspartate + ATP = L-aspartyl-tRNA(Asx) + AMP + diphosphate. In terms of biological role, aspartyl-tRNA synthetase with relaxed tRNA specificity since it is able to aspartylate not only its cognate tRNA(Asp) but also tRNA(Asn). Reaction proceeds in two steps: L-aspartate is first activated by ATP to form Asp-AMP and then transferred to the acceptor end of tRNA(Asp/Asn). The polypeptide is Aspartate--tRNA(Asp/Asn) ligase (Bradyrhizobium sp. (strain BTAi1 / ATCC BAA-1182)).